A 752-amino-acid polypeptide reads, in one-letter code: Cation-transporting P-type ATPase B (752 aa).

Positions 15-78 (RRIRLDVSGM…VVEKAGYHAA (64 aa)) constitute an HMA domain. Residues Cys-26 and Cys-29 each coordinate a metal cation. 6 consecutive transmembrane segments (helical) span residues 105 to 125 (LLVA…FAIV), 132 to 152 (GWGY…AWPF), 167 to 187 (METL…SSVF), 201 to 221 (AILN…VFVL), 361 to 381 (IAGV…AAWL), and 390 to 410 (AFSV…GLAT). The 4-aspartylphosphate intermediate role is filled by Asp-446. A helical transmembrane segment spans residues 714–734 (AIPIAAAGLLNPLIAGAAMAF).

This sequence belongs to the cation transport ATPase (P-type) (TC 3.A.3) family. Type IB subfamily.

It localises to the cell membrane. It catalyses the reaction ATP + H2O = ADP + phosphate + H(+). This is Cation-transporting P-type ATPase B (ctpB) from Mycobacterium bovis (strain ATCC BAA-935 / AF2122/97).